Consider the following 92-residue polypeptide: U21-hexatoxin-Hi1a (92 aa).

Positions 1 to 19 (MKTILSMLIFVALFAAIVG) are cleaved as a signal peptide. 4 disulfides stabilise this stretch: Cys41–Cys55, Cys48–Cys67, Cys54–Cys82, and Cys85–Cys92.

Belongs to the neurotoxin 21 family. In terms of tissue distribution, expressed by the venom gland.

Its subcellular location is the secreted. In terms of biological role, potent insecticidal toxin with probable ion channel impairing activity. In vivo, reversibly paralyzes all flies within 30 minutes, even at low dose (0.3 nmol/g). This is U21-hexatoxin-Hi1a from Hadronyche infensa (Fraser island funnel-web spider).